The chain runs to 530 residues: PTS system maltose-specific EIICB component (530 aa).

The region spanning 1 to 431 (MTAKTAPKVT…FNLKTPGRDS (431 aa)) is the PTS EIIC type-1 domain. The next 10 helical transmembrane spans lie at 22 to 42 (FMLP…GSSL), 69 to 89 (IGSF…PLGL), 96 to 116 (VAAF…NFWL), 138 to 158 (ILGI…GIIV), 189 to 209 (LVMG…AMGI), 289 to 309 (FLSQ…ALAM), 321 to 341 (IKGL…TEPL), 343 to 363 (FLFL…TGLG), 369 to 389 (VLGV…VFGI), and 399 to 419 (MVPV…RFAI). The PTS EIIB type-1 domain maps to 449-530 (GYNVPAILEA…MAGLMHTVQA (82 aa)). Catalysis depends on C471, which acts as the Phosphocysteine intermediate; for EIIB activity.

Its subcellular location is the cell inner membrane. The enzyme catalyses D-maltose(out) + N(pros)-phospho-L-histidyl-[protein] = alpha-maltose 6'-phosphate(in) + L-histidyl-[protein]. Functionally, the phosphoenolpyruvate-dependent sugar phosphotransferase system (sugar PTS), a major carbohydrate active transport system, catalyzes the phosphorylation of incoming sugar substrates concomitantly with their translocation across the cell membrane. This system is involved in maltose transport. MalX can also recognize and transport glucose even though this sugar may not represent the natural substrate of the system. The chain is PTS system maltose-specific EIICB component from Escherichia coli (strain K12).